We begin with the raw amino-acid sequence, 521 residues long: Importin subunit alpha-4 (521 aa).

The disordered stretch occupies residues 1–29 (MAENPSLENHRIKSFKNKGRDVETMRRHR). A2 bears the N-acetylalanine mark. Positions 2 to 58 (AENPSLENHRIKSFKNKGRDVETMRRHRNEVTVELRKNKRDEHLLKKRNVPQEESLE) constitute an IBB domain. Positions 18–29 (KGRDVETMRRHR) are enriched in basic and acidic residues. The Nuclear localization signal motif lies at 43–52 (EHLLKKRNVP). Phosphoserine is present on residues S56 and S60. The ARM 1; truncated repeat unit spans residues 66-106 (FKAQNVTLEAILQNATSDNPVVQLSAVQAARKLLSSDRNPP). ARM repeat units lie at residues 107-149 (IDDL…TSAQ), 150-194 (TQAV…CRDY), 195-233 (VISL…NKDP), 234-278 (PPPM…EQIQ), 279-318 (MVID…TDEQ), 319-360 (TQVV…NQQQ), 361-400 (VQAV…ISGR), and 401-443 (KDQV…IMAG). An NLS binding site (major) region spans residues 137–229 (WALTNIASGT…VTWVIVNLCR (93 aa)). Residues 306–394 (RAVGNIVTGT…QKEAAWAISN (89 aa)) form an NLS binding site (minor) region. One copy of the ARM 10; atypical repeat lies at 447 to 485 (STIAEIIEECGGLEKIEVLQQHENEDIYKLAFEIIDQYF). Y484 is modified (phosphotyrosine).

The protein belongs to the importin alpha family. As to quaternary structure, forms a complex with importin subunit beta-1. Interacts with DDX21. Interacts with NCBP1, NCBP2/CBP20 and NCBP3. Interacts with RCC1. Interacts with ZC3H11A. (Microbial infection) Interacts with HIV-1 integrase; this interaction might play a role in nuclear import of HIV pre-integration complex. In terms of assembly, (Microbial infection) Interacts with influenza virus nucleoprotein; this interaction might play a role in nuclear import of viral genome. As to expression, ubiquitous. Highest levels in heart and skeletal muscle.

It is found in the cytoplasm. Its subcellular location is the nucleus. Its function is as follows. Functions in nuclear protein import as an adapter protein for nuclear receptor KPNB1. Binds specifically and directly to substrates containing either a simple or bipartite NLS motif. Docking of the importin/substrate complex to the nuclear pore complex (NPC) is mediated by KPNB1 through binding to nucleoporin FxFG repeats and the complex is subsequently translocated through the pore by an energy requiring, Ran-dependent mechanism. At the nucleoplasmic side of the NPC, Ran binds to importin-beta and the three components separate and importin-alpha and -beta are re-exported from the nucleus to the cytoplasm where GTP hydrolysis releases Ran from importin. The directionality of nuclear import is thought to be conferred by an asymmetric distribution of the GTP- and GDP-bound forms of Ran between the cytoplasm and nucleus. In vitro, mediates the nuclear import of human cytomegalovirus UL84 by recognizing a non-classical NLS. Recognizes NLSs of influenza A virus nucleoprotein probably through ARM repeats 7-9. This is Importin subunit alpha-4 (KPNA3) from Homo sapiens (Human).